A 604-amino-acid chain; its full sequence is Glutamine--fructose-6-phosphate aminotransferase [isomerizing] (604 aa).

The Nucleophile; for GATase activity role is filled by Cys-2. Positions 2 to 216 constitute a Glutamine amidotransferase type-2 domain; that stretch reads CGIVGYVGFR…DGDVVRLTRE (215 aa). 2 consecutive SIS domains span residues 281-420 and 453-594; these read LALD…GRGA and VAEK…VDQP. The For Fru-6P isomerization activity role is filled by Lys-599.

In terms of assembly, homodimer.

It localises to the cytoplasm. It carries out the reaction D-fructose 6-phosphate + L-glutamine = D-glucosamine 6-phosphate + L-glutamate. Catalyzes the first step in hexosamine metabolism, converting fructose-6P into glucosamine-6P using glutamine as a nitrogen source. This Thermus thermophilus (strain ATCC 27634 / DSM 579 / HB8) protein is Glutamine--fructose-6-phosphate aminotransferase [isomerizing].